Reading from the N-terminus, the 771-residue chain is Probable glycosyltransferase STELLO1 (771 aa).

Positions 1-23 are disordered; sequence MLVQDRAAPSPAKPPKSQIRELP. Residues 1–50 are Cytoplasmic-facing; sequence MLVQDRAAPSPAKPPKSQIRELPTHQQIRRRFSEPKNLDFSTWFSENLSR. The helical transmembrane segment at 51–71 threads the bilayer; the sequence is IAVFSLLIVTIVAFFFLYNTT. At 72–771 the chain is on the lumenal side; the sequence is DTASLLCFQS…EGDPLLMELV (700 aa). Residues Asn-242 and Asn-729 are each glycosylated (N-linked (GlcNAc...) asparagine).

It belongs to the STELLO family. Homo- and heterodimer with STL2. Interacts with CESA1, CESA3, CESA4, CESA6, CESA7 and CESA8, but not with GOT1. Expressed in cells that are expanding or producing secondary cell walls.

The protein resides in the golgi apparatus membrane. Functionally, probable glycosyltransferase regulating the assembly and trafficking of cellulose synthase complexes. This is Probable glycosyltransferase STELLO1 from Arabidopsis thaliana (Mouse-ear cress).